Consider the following 465-residue polypeptide: Na(+)-translocating NADH-quinone reductase subunit A (465 aa).

The protein belongs to the NqrA family. Composed of six subunits; NqrA, NqrB, NqrC, NqrD, NqrE and NqrF.

The catalysed reaction is a ubiquinone + n Na(+)(in) + NADH + H(+) = a ubiquinol + n Na(+)(out) + NAD(+). Its function is as follows. NQR complex catalyzes the reduction of ubiquinone-1 to ubiquinol by two successive reactions, coupled with the transport of Na(+) ions from the cytoplasm to the periplasm. NqrA to NqrE are probably involved in the second step, the conversion of ubisemiquinone to ubiquinol. The polypeptide is Na(+)-translocating NADH-quinone reductase subunit A (Chlamydia trachomatis serovar L2b (strain UCH-1/proctitis)).